Here is a 212-residue protein sequence, read N- to C-terminus: Uridine kinase (212 aa).

An ATP-binding site is contributed by 13–20 (GGSGSGKT).

The protein belongs to the uridine kinase family.

It is found in the cytoplasm. It catalyses the reaction uridine + ATP = UMP + ADP + H(+). The enzyme catalyses cytidine + ATP = CMP + ADP + H(+). It participates in pyrimidine metabolism; CTP biosynthesis via salvage pathway; CTP from cytidine: step 1/3. Its pathway is pyrimidine metabolism; UMP biosynthesis via salvage pathway; UMP from uridine: step 1/1. In Bacillus cereus (strain G9842), this protein is Uridine kinase.